Consider the following 663-residue polypeptide: 72 kDa type IV collagenase (663 aa).

An N-terminal signal peptide occupies residues Met-1–Ala-26. The propeptide at Ala-27–Asn-106 is activation peptide. Residues Pro-97–Val-104 carry the Cysteine switch motif. Residue Cys-99 participates in Zn(2+) binding. Positions Tyr-107 to Val-218 are collagenase-like 1. Ca(2+) is bound by residues Asp-131 and Asp-165. Residues His-175 and Asp-177 each contribute to the Zn(2+) site. Ca(2+) contacts are provided by Asp-182 and Gly-183. Residue His-190 coordinates Zn(2+). 3 residues coordinate Ca(2+): Gly-197, Gly-199, and Asp-201. His-203 contributes to the Zn(2+) binding site. The Ca(2+) site is built by Asp-205, Asp-206, and Glu-208. The collagen-binding stretch occupies residues Arg-219–Ser-393. Fibronectin type-II domains follow at residues Ala-225–His-273, Gly-283–Glu-331, and Ser-341–Asp-389. 6 cysteine pairs are disulfide-bonded: Cys-230/Cys-256, Cys-244/Cys-271, Cys-288/Cys-314, Cys-302/Cys-329, Cys-346/Cys-372, and Cys-360/Cys-387. Residues Leu-394 to Thr-468 are collagenase-like 2. Position 400 (His-400) interacts with Zn(2+). Glu-401 is an active-site residue. Zn(2+) contacts are provided by His-404 and His-410. Residues Ser-445–Leu-464 are disordered. Over residues Glu-449–Thr-463 the composition is skewed to pro residues. Cys-472 and Cys-663 are joined by a disulfide. Hemopexin repeat units lie at residues Asp-475 to Leu-519, Pro-520 to Pro-566, Val-568 to Val-616, and Pro-617 to Cys-663. Asp-479, Asp-524, Asp-572, and Asp-621 together coordinate Ca(2+).

It belongs to the peptidase M10A family. Ligand for integrin alpha-V/beta-3. Requires Ca(2+) as cofactor. It depends on Zn(2+) as a cofactor. Post-translationally, the propeptide is processed by MMP14 (MT-MMP1) and MMP16 (MT-MMP3). As to expression, produced by normal skin fibroblasts.

The protein localises to the secreted. It is found in the extracellular space. The protein resides in the extracellular matrix. The enzyme catalyses Cleavage of gelatin type I and collagen types IV, V, VII, X. Cleaves the collagen-like sequence Pro-Gln-Gly-|-Ile-Ala-Gly-Gln.. The chain is 72 kDa type IV collagenase (MMP2) from Gallus gallus (Chicken).